The primary structure comprises 432 residues: Adenylosuccinate synthetase (432 aa).

Residues 13–19 (GDEGKGK) and 41–43 (GHT) each bind GTP. The active-site Proton acceptor is the aspartate 14. The Mg(2+) site is built by aspartate 14 and glycine 41. IMP is bound by residues 14–17 (DEGK), 39–42 (NAGH), threonine 130, arginine 144, glutamine 225, threonine 240, and arginine 304. Histidine 42 (proton donor) is an active-site residue. 300 to 306 (STTGRRR) contacts substrate. Residues arginine 306, 332 to 334 (KID), and 415 to 417 (STG) contribute to the GTP site.

Belongs to the adenylosuccinate synthetase family. As to quaternary structure, homodimer. Mg(2+) serves as cofactor.

The protein resides in the cytoplasm. The enzyme catalyses IMP + L-aspartate + GTP = N(6)-(1,2-dicarboxyethyl)-AMP + GDP + phosphate + 2 H(+). It functions in the pathway purine metabolism; AMP biosynthesis via de novo pathway; AMP from IMP: step 1/2. Its function is as follows. Plays an important role in the de novo pathway of purine nucleotide biosynthesis. Catalyzes the first committed step in the biosynthesis of AMP from IMP. The chain is Adenylosuccinate synthetase from Blochmanniella pennsylvanica (strain BPEN).